The following is a 495-amino-acid chain: Amidophosphoribosyltransferase (495 aa).

Residues 1–22 (MFPPSSDLTELNDGQPLSGHHA) are disordered. Residues 1–28 (MFPPSSDLTELNDGQPLSGHHADKPEEA) constitute a propeptide that is removed on maturation. Cys-29 acts as the Nucleophile in catalysis. Residues 29–254 (CGVFGIYAPE…AGELVHITES (226 aa)) enclose the Glutamine amidotransferase type-2 domain. Cys-270 contacts [4Fe-4S] cluster. Mg(2+) is bound by residues Ser-317, Asp-379, and Asp-380. [4Fe-4S] cluster is bound by residues Cys-416, Cys-467, and Cys-470.

This sequence in the C-terminal section; belongs to the purine/pyrimidine phosphoribosyltransferase family. Mg(2+) is required as a cofactor. Requires [4Fe-4S] cluster as cofactor.

The enzyme catalyses 5-phospho-beta-D-ribosylamine + L-glutamate + diphosphate = 5-phospho-alpha-D-ribose 1-diphosphate + L-glutamine + H2O. Its pathway is purine metabolism; IMP biosynthesis via de novo pathway; N(1)-(5-phospho-D-ribosyl)glycinamide from 5-phospho-alpha-D-ribose 1-diphosphate: step 1/2. Catalyzes the formation of phosphoribosylamine from phosphoribosylpyrophosphate (PRPP) and glutamine. The polypeptide is Amidophosphoribosyltransferase (Synechocystis sp. (strain ATCC 27184 / PCC 6803 / Kazusa)).